The chain runs to 509 residues: Maturase K (509 aa).

This sequence belongs to the intron maturase 2 family. MatK subfamily.

The protein resides in the plastid. It localises to the chloroplast. Functionally, usually encoded in the trnK tRNA gene intron. Probably assists in splicing its own and other chloroplast group II introns. This chain is Maturase K, found in Citrus sinensis (Sweet orange).